Reading from the N-terminus, the 621-residue chain is MAU2 chromatid cohesion factor homolog (621 aa).

TPR repeat units lie at residues 96-129, 451-484, and 491-524; these read FDTA…SQNN, GGFY…ANAE, and SCSL…ASKI.

The protein belongs to the SCC4/mau-2 family. Interacts with Nipped-B to form the cohesin loading complex.

It localises to the nucleus. It is found in the nucleoplasm. Its function is as follows. Required for association of the cohesin complex with chromatin during interphase. Plays a role in sister chromatid cohesion and normal progression through prometaphase. This Drosophila virilis (Fruit fly) protein is MAU2 chromatid cohesion factor homolog.